A 175-amino-acid polypeptide reads, in one-letter code: Mitochondrial inner membrane protease subunit 2 (175 aa).

Residues 19–37 (FFVAVPVAVTFLDRVACVA) traverse the membrane as a helical segment. Catalysis depends on residues serine 43 and lysine 91.

The protein belongs to the peptidase S26 family. IMP2 subfamily. In terms of assembly, heterodimer of 2 subunits, IMMPL1 and IMMPL2.

Its subcellular location is the mitochondrion inner membrane. Catalyzes the removal of transit peptides required for the targeting of proteins from the mitochondrial matrix, across the inner membrane, into the inter-membrane space. Known to process the nuclear encoded protein DIABLO. The polypeptide is Mitochondrial inner membrane protease subunit 2 (Immp2l) (Mus musculus (Mouse)).